A 371-amino-acid chain; its full sequence is GDP-mannose 3,5-epimerase 2 (371 aa).

Residues G29–K55, D53, and D73 contribute to the NAD(+) site. Substrate is bound by residues G98 and S138–C140. Positions 168 and 172 each coordinate NAD(+). The Proton acceptor role is filled by Y168. Substrate contacts are provided by residues N197, E210–A212, K219, Q235–R237, R300, and S350.

Belongs to the NAD(P)-dependent epimerase/dehydratase family. Requires NAD(+) as cofactor.

It carries out the reaction GDP-alpha-D-mannose = GDP-beta-L-gulose. It catalyses the reaction GDP-beta-L-gulose = GDP-beta-L-galactose. It functions in the pathway cofactor biosynthesis; L-ascorbate biosynthesis via GDP-alpha-D-mannose pathway; L-ascorbate from GDP-alpha-D-mannose: step 1/5. Its function is as follows. Catalyzes a reversible epimerization of GDP-D-mannose that precedes the committed step in the biosynthesis of vitamin C (L-ascorbate), resulting in the hydrolysis of the highly energetic glycosyl-pyrophosphoryl linkage. Able to catalyze 2 distinct epimerization reactions and can release both GDP-L-galactose and GDP-L-gulose from GDP-mannose. In Oryza sativa subsp. japonica (Rice), this protein is GDP-mannose 3,5-epimerase 2 (GME-2).